Consider the following 151-residue polypeptide: Small ribosomal subunit protein uS15 (151 aa).

Belongs to the universal ribosomal protein uS15 family. As to quaternary structure, component of the small ribosomal subunit.

It is found in the cytoplasm. Functionally, component of the small ribosomal subunit. The ribosome is a large ribonucleoprotein complex responsible for the synthesis of proteins in the cell. The chain is Small ribosomal subunit protein uS15 (rps13) from Gillichthys mirabilis (Long-jawed mudsucker).